Consider the following 25-residue polypeptide: Omega conotoxin-CVIF (25 aa).

3 disulfide bridges follow: cysteine 1-cysteine 16, cysteine 8-cysteine 20, and cysteine 15-cysteine 25. A Cysteine amide modification is found at cysteine 25.

The protein belongs to the conotoxin O1 superfamily. In terms of tissue distribution, expressed by the venom duct.

The protein localises to the secreted. In terms of biological role, omega-conotoxins act at presynaptic membranes, they bind and block voltage-gated calcium channels. This toxin blocks N-type calcium channels (Cav2.2/CACNA1B). It shows a higher potency when Cav2.2/CACNA1B is only expressed with the ancillary subunit CACNB3 (IC(50)=0.1 nM) than on Cav2.2/CACNA1B expressed with the ancillary subunits CACNA2D1 and CACNB3 (IC(50)=19.9 nM). The Cav2.2/CACNA1B block by this toxin is voltage-independent, whereas the recovery from toxin block is voltage-dependent. There is a low recovery at physiological membrane potential and a high recovery with hyperpolarized potential. This indicates that the toxin has a higher affinity for Cav2.2/CACNA1B in the inactivated state. It is noteworthy that ancillary subunits beta modulate recovery from this toxin block. Cav2.2/CACNA1B expressed with the ancillary subunit CACNB2a (isoform 2a) almost recover completely from this toxin block, whereas an expression with CACNB3 exhibits relatively weak recovery. Inhibition by this toxin of excitatory synaptic transmission is reversible. In vivo, when tested on rat model of persistent pain, this toxin blocks chronic pain behavior. The protein is Omega conotoxin-CVIF of Conus catus (Cat cone).